The following is a 168-amino-acid chain: 2-oxo-4-hydroxy-4-carboxy-5-ureidoimidazoline decarboxylase (168 aa).

The Proton donor; for OHCU decarboxylase activity role is filled by H70. Residues 70-79 (HPDLGERTEM) are compositionally biased toward basic and acidic residues. A disordered region spans residues 70-93 (HPDLGERTEMTDASEAEQASAELD). Residues P71, 83–87 (SEAEQ), and 118–122 (FVMAV) each bind substrate.

The protein belongs to the OHCU decarboxylase family.

It catalyses the reaction 5-hydroxy-2-oxo-4-ureido-2,5-dihydro-1H-imidazole-5-carboxylate + H(+) = (S)-allantoin + CO2. Its pathway is purine metabolism; urate degradation; (S)-allantoin from urate: step 3/3. Its function is as follows. Catalyzes the stereoselective decarboxylation of 2-oxo-4-hydroxy-4-carboxy-5-ureidoimidazoline (OHCU) to (S)-allantoin. The sequence is that of 2-oxo-4-hydroxy-4-carboxy-5-ureidoimidazoline decarboxylase from Haloferax volcanii (strain ATCC 29605 / DSM 3757 / JCM 8879 / NBRC 14742 / NCIMB 2012 / VKM B-1768 / DS2) (Halobacterium volcanii).